The following is a 130-amino-acid chain: Albumin-1 B (130 aa).

An N-terminal signal peptide occupies residues 1–26; sequence MASVKLASLMVLFATLGMFLTKNVGA. 3 cysteine pairs are disulfide-bonded: cysteine 29/cysteine 46, cysteine 33/cysteine 48, and cysteine 41/cysteine 58. Propeptides lie at residues 64-69 and 123-130; these read VFLRTN and LLKSVSTA.

In terms of processing, the C-terminal glycine may be removed from PA1b. As to expression, major component of both the cotyledons and embryonic axes of mature seeds.

Its function is as follows. PA1b binds to basic 7S globulin (BG) and stimulates its phosphorylation activity. Involved in the signal transduction system to regulate the growth and differentiation as a hormone peptide. Toxic to various insects through binding to a high affinity binding site in the insect gut. This Pisum sativum (Garden pea) protein is Albumin-1 B.